Here is a 148-residue protein sequence, read N- to C-terminus: Outer envelope pore protein 16-1, chloroplastic (148 aa).

Residues 2–73 (PSSTFSGTVS…EHALKKLCKE (72 aa)) form a contains 4 beta strands region. Transmembrane regions (helical) follow at residues 75–91 (VYWG…EYGI), 102–118 (NAML…SAVG), and 125–142 (IVID…SQFV).

It belongs to the Tim17/Tim22/Tim23 family. Plastid outer envelope porin OEP16 (TC 1.B.30) subfamily. Homodimer and oligomers in membrane. Forms large complexes including TOC33, pPORA and OEP161 during pPORA import into plastids at the plastid envelope membrane. As to expression, expressed predominantly in leaves and cotyledons.

The protein resides in the plastid. It is found in the chloroplast outer membrane. Its subcellular location is the etioplast membrane. Its activity is regulated as follows. Stimulated by GTP. Functionally, voltage-dependent high-conductance channel with a slight cation-selectivity; selective for amino acids but excludes triosephosphates or uncharged sugars. Non-essential amino acid-selective channel protein and translocation pore for NADPH:protochlorophyllide oxidoreductase A (PORA) and possibly PORB. Involved in PORA precursor (pPORA) import and thus confers photoprotection onto etiolated seedlings during greening. The protein is Outer envelope pore protein 16-1, chloroplastic (OEP161) of Arabidopsis thaliana (Mouse-ear cress).